The sequence spans 330 residues: Peroxidase 55 (330 aa).

The signal sequence occupies residues 1–30; it reads MDIRSDDAKKPMMMWFLGMLLFSMVAESNA. Disulfide bonds link cysteine 41-cysteine 121, cysteine 74-cysteine 79, cysteine 127-cysteine 326, and cysteine 206-cysteine 238. Residue histidine 72 is the Proton acceptor of the active site. The Ca(2+) site is built by aspartate 73, valine 76, glycine 78, aspartate 80, and serine 82. Proline 169 serves as a coordination point for substrate. Histidine 199 is a binding site for heme b. Threonine 200 is a binding site for Ca(2+). Asparagine 215 is a glycosylation site (N-linked (GlcNAc...) asparagine). Residues aspartate 250, serine 253, and aspartate 258 each contribute to the Ca(2+) site.

The protein belongs to the peroxidase family. Classical plant (class III) peroxidase subfamily. The cofactor is heme b. Ca(2+) serves as cofactor. In terms of tissue distribution, slightly expressed in roots.

It is found in the secreted. It catalyses the reaction 2 a phenolic donor + H2O2 = 2 a phenolic radical donor + 2 H2O. Functionally, removal of H(2)O(2), oxidation of toxic reductants, biosynthesis and degradation of lignin, suberization, auxin catabolism, response to environmental stresses such as wounding, pathogen attack and oxidative stress. These functions might be dependent on each isozyme/isoform in each plant tissue. This is Peroxidase 55 (PER55) from Arabidopsis thaliana (Mouse-ear cress).